The following is a 192-amino-acid chain: Amelogenin, Y isoform (192 aa).

A signal peptide spans 1–16 (MGTWILFACLLGAAYS). The interval 73–192 (QSPQNHALQP…TDKTKREEVD (120 aa)) is disordered. Positions 87-105 (PMVPAQQPVVPQQPMMPVP) are enriched in low complexity. Residues 108–117 (HSMTPIQHHQ) show a composition bias toward polar residues. Residues 132 to 173 (PIQPQPHQPLQPQPPVHPIQRLPPQPPLPPIFPMQPLPPVLP) show a composition bias toward pro residues.

Belongs to the amelogenin family.

The protein resides in the secreted. It localises to the extracellular space. The protein localises to the extracellular matrix. In terms of biological role, plays a role in the biomineralization of teeth. Seems to regulate the formation of crystallites during the secretory stage of tooth enamel development. Thought to play a major role in the structural organization and mineralization of developing enamel. In Bos taurus (Bovine), this protein is Amelogenin, Y isoform (AMELY).